A 323-amino-acid polypeptide reads, in one-letter code: ADP/ATP translocase 4 (323 aa).

Residues 1 to 23 (MQREPPKRKQEKKVEKGLFDATS) lie on the Mitochondrial intermembrane side of the membrane. One copy of the Solcar 1 repeat lies at 22-114 (TSFGKDLLAG…FAFKDKYKQL (93 aa)). A helical membrane pass occupies residues 24–53 (FGKDLLAGGVAAAVSKTTVAPIERVKLLLQ). Residues 54 to 90 (VQASSKQISPEAQYKGIVDCLVRIPREQGFLSYWRGN) are Mitochondrial matrix-facing. The helical transmembrane segment at 91–115 (LANVIRYFPTQALNFAFKDKYKQLF) threads the bilayer. ADP-binding residues include R96 and K108. Residues 116–125 (MSGVNKEKQF) lie on the Mitochondrial intermembrane side of the membrane. A helical membrane pass occupies residues 126-146 (WRWFLANLASGGAAGATSLCV). 2 Solcar repeats span residues 127–217 (RWFL…VKGL) and 224–311 (THFL…IKDL). The Mitochondrial matrix segment spans residues 147–194 (VYPLDFARTRLGADIGKGPEERQFKGLGDCIMKIAKSDGIVGLYQGFG). Residues 195 to 215 (VSVQGIIVYRASYFGAYDTVK) traverse the membrane as a helical segment. At 216 to 226 (GLLPKPKETHF) the chain is on the mitochondrial intermembrane side. A helical transmembrane segment spans residues 227-247 (LVSFFIAQVVTTCSGILSYPF). Residues 248–287 (DTVRRRMMMQSGEAERQYKGTLDCFMKIYQQEGIGAFFRG) are Mitochondrial matrix-facing. R251 serves as a coordination point for ADP. An important for transport activity region spans residues 251-256 (RRRMMM). The Nucleotide carrier signature motif motif lies at 251–256 (RRRMMM). Residues 288 to 305 (AFSNILRGTGGALVLVLY) form a helical membrane-spanning segment. Residues 306-323 (DKIKDLLNIDIGGSSSGD) lie on the Mitochondrial intermembrane side of the membrane.

Belongs to the mitochondrial carrier (TC 2.A.29) family. Monomer.

It is found in the mitochondrion inner membrane. Its subcellular location is the membrane. It localises to the cell projection. The protein resides in the cilium. The protein localises to the flagellum membrane. It carries out the reaction ADP(in) + ATP(out) = ADP(out) + ATP(in). The enzyme catalyses dATP(out) + ADP(in) = dATP(in) + ADP(out). It catalyses the reaction dADP(in) + ADP(out) = dADP(out) + ADP(in). The catalysed reaction is H(+)(in) = H(+)(out). With respect to regulation, the matrix-open state (m-state) is inhibited by the membrane-permeable bongkrekic acid (BKA). The cytoplasmic-open state (c-state) is inhibited by the membrane-impermeable toxic inhibitor carboxyatractyloside (CATR). Proton transporter activity is inhibited by ADP:ATP antiporter activity. Functionally, ADP:ATP antiporter that mediates import of ADP into the mitochondrial matrix for ATP synthesis, and export of ATP out to fuel the cell. Cycles between the cytoplasmic-open state (c-state) and the matrix-open state (m-state): operates by the alternating access mechanism with a single substrate-binding site intermittently exposed to either the cytosolic (c-state) or matrix (m-state) side of the inner mitochondrial membrane. Specifically required during spermatogenesis, probably to mediate ADP:ATP exchange in spermatocytes. Large ATP supplies from mitochondria may be critical for normal progression of spermatogenesis during early stages of meiotic prophase I, including DNA double-strand break repair and chromosomal synapsis. In addition to its ADP:ATP antiporter activity, also involved in mitochondrial uncoupling and mitochondrial permeability transition pore (mPTP) activity. Plays a role in mitochondrial uncoupling by acting as a proton transporter: proton transport uncouples the proton flows via the electron transport chain and ATP synthase to reduce the efficiency of ATP production and cause mitochondrial thermogenesis. Proton transporter activity is inhibited by ADP:ATP antiporter activity, suggesting that SLC25A31/ANT4 acts as a master regulator of mitochondrial energy output by maintaining a delicate balance between ATP production (ADP:ATP antiporter activity) and thermogenesis (proton transporter activity). Proton transporter activity requires free fatty acids as cofactor, but does not transport it. Among nucleotides, may also exchange ADP for dATP and dADP. Also plays a key role in mPTP opening, a non-specific pore that enables free passage of the mitochondrial membranes to solutes of up to 1.5 kDa, and which contributes to cell death. It is however unclear if SLC25A31/ANT4 constitutes a pore-forming component of mPTP or regulates it. The polypeptide is ADP/ATP translocase 4 (Bos taurus (Bovine)).